The sequence spans 653 residues: Acetyl-coenzyme A synthetase 1 (653 aa).

CoA is bound by residues 191 to 194 (RGGR), T311, and N335. ATP-binding positions include 387 to 389 (GEP), 411 to 416 (DTWWQT), D500, and R515. S523 provides a ligand contact to CoA. R526 is an ATP binding site. Positions 537, 539, and 542 each coordinate Mg(2+). R584 is a binding site for CoA. Position 609 is an N6-acetyllysine (K609).

The protein belongs to the ATP-dependent AMP-binding enzyme family. The cofactor is Mg(2+). Acetylated. Deacetylation by the SIR2-homolog deacetylase activates the enzyme.

The catalysed reaction is acetate + ATP + CoA = acetyl-CoA + AMP + diphosphate. Functionally, catalyzes the conversion of acetate into acetyl-CoA (AcCoA), an essential intermediate at the junction of anabolic and catabolic pathways. AcsA undergoes a two-step reaction. In the first half reaction, AcsA combines acetate with ATP to form acetyl-adenylate (AcAMP) intermediate. In the second half reaction, it can then transfer the acetyl group from AcAMP to the sulfhydryl group of CoA, forming the product AcCoA. In Pseudomonas putida (strain ATCC 47054 / DSM 6125 / CFBP 8728 / NCIMB 11950 / KT2440), this protein is Acetyl-coenzyme A synthetase 1.